Consider the following 1220-residue polypeptide: DNA polymerase catalytic subunit (1220 aa).

Belongs to the DNA polymerase type-B family. In terms of assembly, forms a complex with the ssDNA-binding protein, the DNA polymerase processivity factor, and the alkaline exonuclease. Interacts with the helicase-primase complex composed of the primase, the helicase and the primase-associated factor; this interaction may coordinate leading and lagging strand DNA synthesis at the replication fork.

It localises to the host nucleus. It catalyses the reaction DNA(n) + a 2'-deoxyribonucleoside 5'-triphosphate = DNA(n+1) + diphosphate. The enzyme catalyses Endonucleolytic cleavage to 5'-phosphomonoester.. Replicates viral genomic DNA. The replication complex is composed of six viral proteins: the DNA polymerase, processivity factor, primase, primase-associated factor, helicase, and ssDNA-binding protein. Additionally, the polymerase contains an intrinsic ribonuclease H (RNase H) activity that specifically degrades RNA/DNA heteroduplexes or duplex DNA substrates in the 5' to 3' direction. Therefore, it can catalyze the excision of the RNA primers that initiate the synthesis of Okazaki fragments at a replication fork during viral DNA replication. The chain is DNA polymerase catalytic subunit (MDV043) from Gallid herpesvirus 2 (strain Chicken/Md5/ATCC VR-987) (GaHV-2).